The primary structure comprises 121 residues: UPF0102 protein Xfasm12_1748 (121 aa).

Belongs to the UPF0102 family.

The polypeptide is UPF0102 protein Xfasm12_1748 (Xylella fastidiosa (strain M12)).